Here is a 329-residue protein sequence, read N- to C-terminus: Diaminopimelate epimerase (329 aa).

N14 and N73 together coordinate substrate. The active-site Proton donor is C82. Substrate is bound by residues 83–84 (GN), N170, N206, and 224–225 (ER). The Proton acceptor role is filled by C233. Substrate is bound at residue 234-235 (GT).

Belongs to the diaminopimelate epimerase family. As to quaternary structure, homodimer.

It localises to the cytoplasm. The catalysed reaction is (2S,6S)-2,6-diaminopimelate = meso-2,6-diaminopimelate. Its pathway is amino-acid biosynthesis; L-lysine biosynthesis via DAP pathway; DL-2,6-diaminopimelate from LL-2,6-diaminopimelate: step 1/1. In terms of biological role, catalyzes the stereoinversion of LL-2,6-diaminopimelate (L,L-DAP) to meso-diaminopimelate (meso-DAP), a precursor of L-lysine and an essential component of the bacterial peptidoglycan. This Listeria monocytogenes serotype 4a (strain HCC23) protein is Diaminopimelate epimerase.